The sequence spans 353 residues: Fasciclin-like arabinogalactan protein 21 (353 aa).

Residues 1–28 form the signal peptide; the sequence is MGCCSSDCFVYFILSIALAFMAISTTLR. N-linked (GlcNAc...) asparagine glycosylation is found at Asn-51, Asn-81, Asn-94, Asn-200, Asn-249, and Asn-315. An FAS1 1 domain is found at 83 to 181; that stretch reads TLFAIEDASF…HGVIGPFSPL (99 aa). Residues 254 to 352 form the FAS1 2 domain; it reads TILATPNLVS…GISHTLEIPH (99 aa).

This sequence belongs to the fasciclin-like AGP family.

It is found in the secreted. In terms of biological role, may be a cell surface adhesion protein. This chain is Fasciclin-like arabinogalactan protein 21 (FLA21), found in Arabidopsis thaliana (Mouse-ear cress).